We begin with the raw amino-acid sequence, 626 residues long: Polyphenol oxidase C, chloroplastic (626 aa).

A chloroplast-targeting transit peptide spans 1–83; sequence MASLCSNSST…ANAIPLAASA (83 aa). 2 cysteine pairs are disulfide-bonded: C94–C110 and C109–C177. Cu cation contacts are provided by H176, H194, H203, H324, H328, and H366. The 2'-(S-cysteinyl)-histidine (Cys-His) cross-link spans 180–194; that stretch reads CNGGYSIDGKVLQVH.

Belongs to the tyrosinase family. Requires Cu(2+) as cofactor.

Its subcellular location is the plastid. The protein localises to the chloroplast thylakoid lumen. It carries out the reaction 2 catechol + O2 = 2 1,2-benzoquinone + 2 H2O. In terms of biological role, catalyzes the oxidation of mono- and o-diphenols to o-diquinones. This Solanum lycopersicum (Tomato) protein is Polyphenol oxidase C, chloroplastic.